The sequence spans 304 residues: E3 ubiquitin-protein ligase CHIP (304 aa).

Residues 1-10 (MKGKEEKEGG) are compositionally biased toward basic and acidic residues. Residues 1–30 (MKGKEEKEGGARLGTGGGGSPDKSPSAQEL) are disordered. Residue lysine 2 forms a Glycyl lysine isopeptide (Lys-Gly) (interchain with G-Cter in ubiquitin) linkage. The segment covering 11–20 (ARLGTGGGGS) has biased composition (gly residues). At serine 20 the chain carries Phosphoserine. Residue lysine 23 forms a Glycyl lysine isopeptide (Lys-Gly) (interchain with G-Cter in ubiquitin) linkage. A phosphoserine mark is found at serine 24 and serine 26. TPR repeat units follow at residues 27-60 (AQEL…NPLV), 61-94 (AVYY…DGQS), and 96-128 (KAHF…AKEQ). The interval 102 to 201 (GQCQLEMESY…GHIRAQQACI (100 aa)) is required for interaction with MAPK7. A required for interaction with and ubiquitination of MYOCD region spans residues 143–197 (AKKKRWNSIEERRIHQESELHSYLTRLIAAERERELEECQRNHEGHEDDGHIRAQ). The required for interaction with FOXO1 stretch occupies residues 144-198 (KKKRWNSIEERRIHQESELHSYLTRLIAAERERELEECQRNHEGHEDDGHIRAQQ). The required for ubiquitination of FOXO1 stretch occupies residues 144–304 (KKKRWNSIEE…ISENGWVEDY (161 aa)). Phosphoserine is present on serine 150. Glycyl lysine isopeptide (Lys-Gly) (interchain with G-Cter in ubiquitin) cross-links involve residues lysine 222 and lysine 256. The 75-residue stretch at 227-301 (DIPDYLCGKI…DAFISENGWV (75 aa)) folds into the U-box domain. The residue at position 274 (serine 274) is a Phosphoserine.

As to quaternary structure, homodimer. Interacts with BAG2, and with the E2 ubiquitin conjugating enzymes UBE2D1, UBE2D2 and UBE2D3. Detected in a ternary complex containing STUB1, HSPA1A and HSPBP1. Part of a complex composed of STUB1/CHIP, VCP/p97, CHRNA3, and UBXN2A that modulates the ubiquitination and endoplasmic reticulum-associated degradation (ERAD) of CHRNA3. Within the complex UBXN2A acts as a scaffold protein required for the interaction of CHRNA3 with VCP/p97, this interaction also inhibits CHRNA3 ubiquitination by STUB1/CHIP and subsequently ERAD. Interacts with MKKS. Interacts with DNAAF4. Interacts (via the U-box domain) with the UBE2V2-UBE2N heterodimer; the complex has a specific 'Lys-63'-linked polyubiquitination activity. Interacts (when monoubiquitinated) with ATXN3. Interacts with UBE2W. Interacts with DNAJB6. Interacts with FLCN and HSP90AA1. Interacts with HSP90. Interacts with UBE2N and UBE2V1. Interacts (via TPR repeats) with HSPA8 (via C-terminus). Interacts (via TPR repeats) with HSPA1A (via C-terminus). Interacts with the non-acetylated form of HSPA1A and HSPA1B. Interacts with SMAD3 and HSP90AB1. Interacts with UBE4B. Interacts with PRMT5. Interacts with MYOCD (via C-terminus). Interacts with FOXO1 (when phosphorylated on 'Ser-253'). Interacts with MAPK7/ERK5; the interaction is enhanced in the presence of IGF1 or MAP2K5 and promotes STUB1/CHIP E3 ligase activity. Interacts with and ubiquitinates ESR1; the interaction is promoted in the absence of estradiol (17-beta-estradiol/E2). Interacts with ESR2. Interacts with and ubiquitinates NFATC3; HSPA1A/HSP70 is required as a co-chaperone. In macrophages, interacts with PAQR3; the interaction promotes PPARG poylubiquitination and STUB1-mediated degradation. Component of the chaperone-assisted selective autophagy (CASA) complex consisting of BAG3, HSPA8/HSC70, HSPB8 and STUB1/CHIP. In terms of processing, auto-ubiquitinated; mediated by UBE2D1 and UBE2D2 and enhanced in the presence of MAP2K5. Monoubiquitinated at Lys-2 following cell stress by UBE2W, promoting the interaction with ATXN3. In terms of tissue distribution, expressed in the brain.

It localises to the cytoplasm. It is found in the nucleus. Its subcellular location is the mitochondrion. The catalysed reaction is S-ubiquitinyl-[E2 ubiquitin-conjugating enzyme]-L-cysteine + [acceptor protein]-L-lysine = [E2 ubiquitin-conjugating enzyme]-L-cysteine + N(6)-ubiquitinyl-[acceptor protein]-L-lysine.. It participates in protein modification; protein ubiquitination. In terms of biological role, E3 ubiquitin-protein ligase which targets misfolded chaperone substrates towards proteasomal degradation. Plays a role in the maintenance of mitochondrial morphology and promotes mitophagic removal of dysfunctional mitochondria; thereby acts as a protector against apoptosis in response to cellular stress. Negatively regulates vascular smooth muscle contraction, via degradation of the transcriptional activator MYOCD and subsequent loss of transcription of genes involved in vascular smooth muscle contraction. Promotes survival and proliferation of cardiac smooth muscle cells via ubiquitination and degradation of FOXO1, resulting in subsequent repression of FOXO1-mediated transcription of pro-apoptotic genes. Ubiquitinates ICER-type isoforms of CREM and targets them for proteasomal degradation, thereby acts as a positive effector of MAPK/ERK-mediated inhibition of apoptosis in cardiomyocytes. Inhibits lipopolysaccharide-induced apoptosis and hypertrophy in cardiomyocytes, via ubiquitination and subsequent proteasomal degradation of NFATC3. Collaborates with ATXN3 in the degradation of misfolded chaperone substrates: ATXN3 restricting the length of ubiquitin chain attached to STUB1/CHIP substrates and preventing further chain extension. Ubiquitinates NOS1 in concert with Hsp70 and Hsp40. Modulates the activity of several chaperone complexes, including Hsp70, Hsc70 and Hsp90. Ubiquitinates CHRNA3 targeting it for endoplasmic reticulum-associated degradation in cortical neurons, as part of the STUB1-VCP-UBXN2A complex. Ubiquitinates and promotes ESR1 proteasomal degradation in response to age-related circulating estradiol (17-beta-estradiol/E2) decline, thereby promotes neuronal apoptosis in response to ischemic reperfusion injury. Mediates transfer of non-canonical short ubiquitin chains to HSPA8 that have no effect on HSPA8 degradation. Mediates polyubiquitination of DNA polymerase beta (POLB) at 'Lys-41', 'Lys-61' and 'Lys-81', thereby playing a role in base-excision repair: catalyzes polyubiquitination by amplifying the HUWE1/ARF-BP1-dependent monoubiquitination and leading to POLB-degradation by the proteasome. Mediates polyubiquitination of CYP3A4. Ubiquitinates EPHA2 and may regulate the receptor stability and activity through proteasomal degradation. Acts as a co-chaperone for HSPA1A and HSPA1B chaperone proteins and promotes ubiquitin-mediated protein degradation. Negatively regulates the suppressive function of regulatory T-cells (Treg) during inflammation by mediating the ubiquitination and degradation of FOXP3 in a HSPA1A/B-dependent manner. Catalyzes monoubiquitination of SIRT6, preventing its degradation by the proteasome. Likely mediates polyubiquitination and down-regulates plasma membrane expression of PD-L1/CD274, an immune inhibitory ligand critical for immune tolerance to self and antitumor immunity. Negatively regulates TGF-beta signaling by modulating the basal level of SMAD3 via ubiquitin-mediated degradation. Plays a role in the degradation of TP53. Mediates ubiquitination of RIPK3 leading to its subsequent proteasome-dependent degradation. May regulate myosin assembly in striated muscles together with UBE4B and VCP/p97 by targeting myosin chaperone UNC45B for proteasomal degradation. Ubiquitinates PPARG in macrophages playing a role in M2 macrophages polarization and angiogenesis. The polypeptide is E3 ubiquitin-protein ligase CHIP (Mus musculus (Mouse)).